The following is a 312-amino-acid chain: Olfactory receptor 7G3 (312 aa).

Over 1–25 the chain is Extracellular; it reads MKAGNFSDTPEFFLLGLSGDPELQP. An N-linked (GlcNAc...) asparagine glycan is attached at N5. Residues 26–46 form a helical membrane-spanning segment; sequence ILFMLFLSMYLATMLGNLLII. The Cytoplasmic segment spans residues 47–54; sequence LAVNSDSH. A helical membrane pass occupies residues 55–75; sequence LHTPMYFLLSILSLVDICFTS. Over 76 to 99 the chain is Extracellular; sequence TTMPKMLVNIQAQAQSINYTGCLT. The N-linked (GlcNAc...) asparagine glycan is linked to N93. A disulfide bridge links C97 with C189. The helical transmembrane segment at 100 to 120 threads the bilayer; that stretch reads QICFVLVFVGLENGILVMMAY. The Cytoplasmic segment spans residues 121–139; sequence DRFVAICHPLRYNVIMNPK. The helical transmembrane segment at 140–160 threads the bilayer; the sequence is LCGLLLLLSFIVSVLDALLHT. At 161 to 197 the chain is on the extracellular side; it reads LMVLQLTFCIDLEIPHFFCELAHILKLACSDVLINNI. The chain crosses the membrane as a helical span at residues 198 to 217; it reads LVYLVTSLLGVVPLSGIIFS. At 218–237 the chain is on the cytoplasmic side; it reads YTRIVSSVMKIPSAGGKYKA. The chain crosses the membrane as a helical span at residues 238–258; the sequence is FSICGSHLIVVSLFYGTGFGV. Residues 259 to 271 lie on the Extracellular side of the membrane; it reads YLSSGATHSSRKG. Residues 272 to 292 form a helical membrane-spanning segment; it reads AIASVMYTVVTPMLNPLIYSL. Topologically, residues 293–312 are cytoplasmic; sequence RNKDMLKALRKLISRIPSFH.

This sequence belongs to the G-protein coupled receptor 1 family.

It localises to the cell membrane. Functionally, odorant receptor. The chain is Olfactory receptor 7G3 (OR7G3) from Homo sapiens (Human).